Consider the following 553-residue polypeptide: Muellerian-inhibiting factor (553 aa).

The N-terminal stretch at 1–22 (MQGPHLSLLLLLLATMGAVLQA) is a signal peptide. A propeptide spanning residues 23 to 445 (DTVEELTNTR…GREGRGRAGR (423 aa)) is cleaved from the precursor. Residues asparagine 325 and asparagine 409 are each glycosylated (N-linked (GlcNAc...) asparagine). 3 cysteine pairs are disulfide-bonded: cysteine 455–cysteine 519, cysteine 481–cysteine 550, and cysteine 485–cysteine 552.

This sequence belongs to the TGF-beta family. Homodimer; disulfide-linked. Post-translationally, preproprotein is proteolytically processed to generate N- and C-terminal cleavage products that homodimerize and associate to form a biologically active non-covalent complex. Binding of the non-covalent complex to AMHR2 induces dissociation of the pro-region from the mature C-terminal dimer. The N-terminal portion of the protein, despite having no intrinsic activity, has the role of amplifying the activity of the C-terminus. In terms of tissue distribution, mainly expressed in granulosa cells from preantral and small antral follicles.

The protein localises to the secreted. Plays an important role in several reproductive functions. Induces Muellerian duct regression during male fetal sexual differentiation and plays a role in Leydig cell differentiation and function. In female acts as a negative regulator of the primordial to primary follicle transition and decreases FSH sensitivity of growing follicles. AMH signals by binding to a specific type-II receptor, AMHR2, that heterodimerizes with type-I receptors (ACVR1 and BMPR1A), and recruiting SMAD proteins that are translocated to the nucleus to regulate target gene expression. This chain is Muellerian-inhibiting factor (Amh), found in Rattus norvegicus (Rat).